Here is a 359-residue protein sequence, read N- to C-terminus: Membrane-bound lytic murein transglycosylase C (359 aa).

The signal sequence occupies residues 1–16 (MKKYLALALIAPLLIS). A lipid anchor (N-palmitoyl cysteine) is attached at cysteine 17. Cysteine 17 is lipidated: S-diacylglycerol cysteine.

It belongs to the transglycosylase Slt family.

It is found in the cell outer membrane. The catalysed reaction is Exolytic cleavage of the (1-&gt;4)-beta-glycosidic linkage between N-acetylmuramic acid (MurNAc) and N-acetylglucosamine (GlcNAc) residues in peptidoglycan, from either the reducing or the non-reducing ends of the peptidoglycan chains, with concomitant formation of a 1,6-anhydrobond in the MurNAc residue.. In terms of biological role, murein-degrading enzyme. May play a role in recycling of muropeptides during cell elongation and/or cell division. This Escherichia coli O127:H6 (strain E2348/69 / EPEC) protein is Membrane-bound lytic murein transglycosylase C.